Consider the following 461-residue polypeptide: GTPase Der (461 aa).

2 EngA-type G domains span residues 3–167 (PQVI…GEKQ) and 190–371 (LKLA…AAWS). GTP is bound by residues 9 to 16 (GRPNVGKS), 56 to 60 (DTAGW), 119 to 122 (NKAE), 196 to 203 (GRPNAGKS), 249 to 253 (DTAGM), and 314 to 317 (NKWD). Residues 372 to 456 (KRVPTAALNR…PIRLTLRSPK (85 aa)) form the KH-like domain.

It belongs to the TRAFAC class TrmE-Era-EngA-EngB-Septin-like GTPase superfamily. EngA (Der) GTPase family. In terms of assembly, associates with the 50S ribosomal subunit.

Functionally, GTPase that plays an essential role in the late steps of ribosome biogenesis. The chain is GTPase Der from Novosphingobium aromaticivorans (strain ATCC 700278 / DSM 12444 / CCUG 56034 / CIP 105152 / NBRC 16084 / F199).